The primary structure comprises 449 residues: Exodeoxyribonuclease 7 large subunit (449 aa).

This sequence belongs to the XseA family. In terms of assembly, heterooligomer composed of large and small subunits.

It is found in the cytoplasm. It catalyses the reaction Exonucleolytic cleavage in either 5'- to 3'- or 3'- to 5'-direction to yield nucleoside 5'-phosphates.. Functionally, bidirectionally degrades single-stranded DNA into large acid-insoluble oligonucleotides, which are then degraded further into small acid-soluble oligonucleotides. The protein is Exodeoxyribonuclease 7 large subunit of Lacticaseibacillus paracasei (strain ATCC 334 / BCRC 17002 / CCUG 31169 / CIP 107868 / KCTC 3260 / NRRL B-441) (Lactobacillus paracasei).